The following is a 285-amino-acid chain: 2-dehydro-3-deoxyphosphooctonate aldolase (285 aa).

Belongs to the KdsA family.

The protein resides in the cytoplasm. It catalyses the reaction D-arabinose 5-phosphate + phosphoenolpyruvate + H2O = 3-deoxy-alpha-D-manno-2-octulosonate-8-phosphate + phosphate. It participates in carbohydrate biosynthesis; 3-deoxy-D-manno-octulosonate biosynthesis; 3-deoxy-D-manno-octulosonate from D-ribulose 5-phosphate: step 2/3. Its pathway is bacterial outer membrane biogenesis; lipopolysaccharide biosynthesis. The chain is 2-dehydro-3-deoxyphosphooctonate aldolase from Bordetella parapertussis (strain 12822 / ATCC BAA-587 / NCTC 13253).